The sequence spans 169 residues: Der GTPase-activating protein YihI (169 aa).

Disordered regions lie at residues 1–75 (MKPS…IPLG) and 144–169 (GLSYDDDEEEEEDEKQEDMMRLLRGN). Residues 10-19 (SKGHAKARRK) show a composition bias toward basic residues. Residues 20 to 30 (TREELDQEARD) show a composition bias toward basic and acidic residues. Over residues 31–40 (RKRQKKRRGH) the composition is skewed to basic residues. The segment covering 49 to 58 (GNTTSGSKGQ) has biased composition (polar residues). Residues 147–159 (YDDDEEEEEDEKQ) show a composition bias toward acidic residues. Residues 160–169 (EDMMRLLRGN) are compositionally biased toward basic and acidic residues.

It belongs to the YihI family. In terms of assembly, interacts with Der.

Functionally, a GTPase-activating protein (GAP) that modifies Der/EngA GTPase function. May play a role in ribosome biogenesis. The polypeptide is Der GTPase-activating protein YihI (Escherichia coli (strain 55989 / EAEC)).